A 175-amino-acid polypeptide reads, in one-letter code: ADP-ribosylation factor 6 (175 aa).

Residue glycine 2 is the site of N-myristoyl glycine attachment. The N6-myristoyl lysine moiety is linked to residue lysine 3. Residues 23 to 28 (AAGKTT), 41 to 44 (TIPT), 63 to 67 (DVGGQ), 122 to 125 (NKQD), and 155 to 156 (CA) each bind GTP.

This sequence belongs to the small GTPase superfamily. Arf family.

The protein localises to the cytoplasm. Its subcellular location is the cytosol. It localises to the cell membrane. It is found in the endosome membrane. The protein resides in the recycling endosome membrane. The protein localises to the cell projection. Its subcellular location is the filopodium membrane. It localises to the ruffle. It is found in the cleavage furrow. The protein resides in the midbody. The protein localises to the midbody ring. The enzyme catalyses GTP + H2O = GDP + phosphate + H(+). Its function is as follows. GTP-binding protein involved in protein trafficking; regulates endocytic recycling and cytoskeleton remodeling. May modulate vesicle budding and uncoating within the Golgi apparatus. May contribute to the regulation of dendritic branching, filopodia extension and dendritic spine development. In Gallus gallus (Chicken), this protein is ADP-ribosylation factor 6 (ARF6).